Consider the following 243-residue polypeptide: 23S rRNA (guanosine-2'-O-)-methyltransferase RlmB (243 aa).

S-adenosyl-L-methionine-binding residues include G196, I216, and L225.

This sequence belongs to the class IV-like SAM-binding methyltransferase superfamily. RNA methyltransferase TrmH family. RlmB subfamily. Homodimer.

The protein resides in the cytoplasm. The enzyme catalyses guanosine(2251) in 23S rRNA + S-adenosyl-L-methionine = 2'-O-methylguanosine(2251) in 23S rRNA + S-adenosyl-L-homocysteine + H(+). Specifically methylates the ribose of guanosine 2251 in 23S rRNA. This Shigella flexneri protein is 23S rRNA (guanosine-2'-O-)-methyltransferase RlmB.